Reading from the N-terminus, the 199-residue chain is Probable GTP-binding protein EngB (199 aa).

The EngB-type G domain maps to 28 to 199; the sequence is DLPEIALAGR…ESWDTILEYL (172 aa). Residues 36–43, 63–67, 81–84, 148–151, and 180–182 contribute to the GTP site; these read GRSNVGKS, GKTQL, DVPG, TKAD, and FSS. Residues Ser-43 and Thr-65 each contribute to the Mg(2+) site.

It belongs to the TRAFAC class TrmE-Era-EngA-EngB-Septin-like GTPase superfamily. EngB GTPase family. Mg(2+) serves as cofactor.

Its function is as follows. Necessary for normal cell division and for the maintenance of normal septation. The protein is Probable GTP-binding protein EngB of Streptococcus equi subsp. zooepidemicus (strain H70).